Here is a 436-residue protein sequence, read N- to C-terminus: Protein 60A (436 aa).

The signal sequence occupies residues 1–27; sequence MTASLVVLPSLWLILIIFTAPYTHCTQ. Residues 28–317 constitute a propeptide that is removed on maturation; it reads SGIYIDNGKD…STLHQRKKSK (290 aa). 4 N-linked (GlcNAc...) asparagine glycosylation sites follow: Asn-102, Asn-114, Asn-217, and Asn-229. The tract at residues 293–322 is disordered; that stretch reads IKSTSGHSTQKRTKRSTLHQRKKSKSEPVN. Residues 301-316 are compositionally biased toward basic residues; the sequence is TQKRTKRSTLHQRKKS. Disulfide bonds link Cys-335–Cys-401, Cys-364–Cys-433, and Cys-368–Cys-435. The N-linked (GlcNAc...) asparagine glycan is linked to Asn-377.

It belongs to the TGF-beta family. In terms of assembly, homodimer; disulfide-linked.

The protein resides in the secreted. The chain is Protein 60A (gbb) from Drosophila virilis (Fruit fly).